A 109-amino-acid chain; its full sequence is FK506-binding protein (109 aa).

The 89-residue stretch at 20–108 (GKEITVHYTG…IFEVELLKVY (89 aa)) folds into the PPIase FKBP-type domain.

This sequence belongs to the FKBP-type PPIase family.

The catalysed reaction is [protein]-peptidylproline (omega=180) = [protein]-peptidylproline (omega=0). Its activity is regulated as follows. Inhibited by FK506. Functionally, PPIases accelerate the folding of proteins. This Neisseria meningitidis serogroup A / serotype 4A (strain DSM 15465 / Z2491) protein is FK506-binding protein (fbp).